The following is a 601-amino-acid chain: Proline--tRNA ligase (601 aa).

The protein belongs to the class-II aminoacyl-tRNA synthetase family. ProS type 1 subfamily. Homodimer.

The protein resides in the cytoplasm. The catalysed reaction is tRNA(Pro) + L-proline + ATP = L-prolyl-tRNA(Pro) + AMP + diphosphate. Functionally, catalyzes the attachment of proline to tRNA(Pro) in a two-step reaction: proline is first activated by ATP to form Pro-AMP and then transferred to the acceptor end of tRNA(Pro). As ProRS can inadvertently accommodate and process non-cognate amino acids such as alanine and cysteine, to avoid such errors it has two additional distinct editing activities against alanine. One activity is designated as 'pretransfer' editing and involves the tRNA(Pro)-independent hydrolysis of activated Ala-AMP. The other activity is designated 'posttransfer' editing and involves deacylation of mischarged Ala-tRNA(Pro). The misacylated Cys-tRNA(Pro) is not edited by ProRS. The polypeptide is Proline--tRNA ligase (Picosynechococcus sp. (strain ATCC 27264 / PCC 7002 / PR-6) (Agmenellum quadruplicatum)).